The following is a 323-amino-acid chain: tRNA-dihydrouridine(16) synthase (323 aa).

Residues 7–9 and Gln-68 each bind FMN; that span reads PME. The active-site Proton donor is the Cys-98. FMN is bound by residues Lys-139, 199-201, and 223-224; these read NGE and GR.

The protein belongs to the Dus family. DusC subfamily. The cofactor is FMN.

It carries out the reaction 5,6-dihydrouridine(16) in tRNA + NADP(+) = uridine(16) in tRNA + NADPH + H(+). It catalyses the reaction 5,6-dihydrouridine(16) in tRNA + NAD(+) = uridine(16) in tRNA + NADH + H(+). Catalyzes the synthesis of 5,6-dihydrouridine (D), a modified base found in the D-loop of most tRNAs, via the reduction of the C5-C6 double bond in target uridines. Specifically modifies U16 in tRNAs. The sequence is that of tRNA-dihydrouridine(16) synthase from Pseudomonas putida (strain ATCC 47054 / DSM 6125 / CFBP 8728 / NCIMB 11950 / KT2440).